The primary structure comprises 254 residues: Ribonuclease HII (254 aa).

Residues 70-254 (TCIAGIDEAG…SFAPVKSVIS (185 aa)) enclose the RNase H type-2 domain. 3 residues coordinate a divalent metal cation: aspartate 76, glutamate 77, and aspartate 168.

This sequence belongs to the RNase HII family. It depends on Mn(2+) as a cofactor. Requires Mg(2+) as cofactor.

The protein localises to the cytoplasm. The enzyme catalyses Endonucleolytic cleavage to 5'-phosphomonoester.. Its function is as follows. Endonuclease that specifically degrades the RNA of RNA-DNA hybrids. The polypeptide is Ribonuclease HII (Bacillus pumilus (strain SAFR-032)).